The primary structure comprises 130 residues: MARQSKRLAPRRLKRKVSKGVVHIQASFNNTIVTITDSSGGVLAWSSAGACGFRGAKKGTPFAAQTAAETAIRQCIDQGMRQADIIVQGPGNGRETAIRALQLAGVGVSLIRDITSVPHNGCRPPKQRRI.

Belongs to the universal ribosomal protein uS11 family. As to quaternary structure, part of the 30S ribosomal subunit.

The protein resides in the plastid. The protein localises to the chloroplast. This is Small ribosomal subunit protein uS11c from Nephroselmis olivacea (Green alga).